The sequence spans 341 residues: NADH-ubiquinone oxidoreductase chain 2 (341 aa).

9 helical membrane-spanning segments follow: residues 8–28 (IFLI…SWLG), 61–81 (FLTQ…LMFL), 95–115 (ILIL…FWFP), 145–165 (FIYN…SLGG), 174–191 (LMAF…LAMM), 195–215 (MLWM…VLMF), 238–258 (LLIF…GFLP), 272–292 (LFIL…YLRL), and 321–341 (LIFN…YIIM).

Belongs to the complex I subunit 2 family.

It localises to the mitochondrion inner membrane. The catalysed reaction is a ubiquinone + NADH + 5 H(+)(in) = a ubiquinol + NAD(+) + 4 H(+)(out). Functionally, core subunit of the mitochondrial membrane respiratory chain NADH dehydrogenase (Complex I) that is believed to belong to the minimal assembly required for catalysis. Complex I functions in the transfer of electrons from NADH to the respiratory chain. The immediate electron acceptor for the enzyme is believed to be ubiquinone. This chain is NADH-ubiquinone oxidoreductase chain 2 (mt:ND2), found in Anopheles gambiae (African malaria mosquito).